Consider the following 235-residue polypeptide: Ribosomal RNA small subunit methyltransferase G (235 aa).

S-adenosyl-L-methionine-binding positions include glycine 74, phenylalanine 79, 97–99, 125–126, and arginine 144; these read EAT and AE.

This sequence belongs to the methyltransferase superfamily. RNA methyltransferase RsmG family.

The protein localises to the cytoplasm. Its function is as follows. Specifically methylates the N7 position of a guanine in 16S rRNA. The sequence is that of Ribosomal RNA small subunit methyltransferase G from Dehalococcoides mccartyi (strain ATCC BAA-2100 / JCM 16839 / KCTC 5957 / BAV1).